The chain runs to 99 residues: MALTLTDVKRIAHLARLEMADADAERTLTQLNEFFGLVEQMQAVDTTGIAPLAHPIEQILEVAQRLRDDVVTEHVNRDDNQRPAPAVQDGLYLVPKVIE.

The protein belongs to the GatC family. As to quaternary structure, heterotrimer of A, B and C subunits.

It carries out the reaction L-glutamyl-tRNA(Gln) + L-glutamine + ATP + H2O = L-glutaminyl-tRNA(Gln) + L-glutamate + ADP + phosphate + H(+). The catalysed reaction is L-aspartyl-tRNA(Asn) + L-glutamine + ATP + H2O = L-asparaginyl-tRNA(Asn) + L-glutamate + ADP + phosphate + 2 H(+). Functionally, allows the formation of correctly charged Asn-tRNA(Asn) or Gln-tRNA(Gln) through the transamidation of misacylated Asp-tRNA(Asn) or Glu-tRNA(Gln) in organisms which lack either or both of asparaginyl-tRNA or glutaminyl-tRNA synthetases. The reaction takes place in the presence of glutamine and ATP through an activated phospho-Asp-tRNA(Asn) or phospho-Glu-tRNA(Gln). This Burkholderia thailandensis (strain ATCC 700388 / DSM 13276 / CCUG 48851 / CIP 106301 / E264) protein is Aspartyl/glutamyl-tRNA(Asn/Gln) amidotransferase subunit C.